Consider the following 373-residue polypeptide: Peptide chain release factor 1-like, mitochondrial (373 aa).

The N-terminal 13 residues, 1–13 (MRSGFLRSARRLW), are a transit peptide targeting the mitochondrion. Positions 56–111 (QLAAAARLLNEKERELRDTESLLHDENEDLKKLAESEIALCQKEIAELKHRIISLL) form a coiled coil. Residues 229-293 (PKDLRIDTKR…LRARLYSMRL (65 aa)) are GGQ domain. The GGQ signature appears at 243-245 (GGQ). Gln245 bears the N5-methylglutamine mark.

This sequence belongs to the prokaryotic/mitochondrial release factor family. Post-translationally, methylation of glutamine in the GGQ triplet by HEMK1 is conserved from bacteria to mammals.

The protein localises to the mitochondrion. Its function is as follows. Mitochondrial peptide chain release factor that directs the termination of translation in response to the peptide chain termination codons UAA and UAG. The protein is Peptide chain release factor 1-like, mitochondrial (Mtrf1l) of Rattus norvegicus (Rat).